We begin with the raw amino-acid sequence, 438 residues long: Glutamyl-tRNA(Gln) amidotransferase subunit D (438 aa).

Residues 92-422 (PEVTIIGTGG…EEVRKMMLTN (331 aa)) form the Asparaginase/glutaminase domain. Active-site residues include Thr102, Thr178, Asp179, and Lys256.

This sequence belongs to the asparaginase 1 family. GatD subfamily. Heterodimer of GatD and GatE.

The enzyme catalyses L-glutamyl-tRNA(Gln) + L-glutamine + ATP + H2O = L-glutaminyl-tRNA(Gln) + L-glutamate + ADP + phosphate + H(+). Functionally, allows the formation of correctly charged Gln-tRNA(Gln) through the transamidation of misacylated Glu-tRNA(Gln) in organisms which lack glutaminyl-tRNA synthetase. The reaction takes place in the presence of glutamine and ATP through an activated gamma-phospho-Glu-tRNA(Gln). The GatDE system is specific for glutamate and does not act on aspartate. The protein is Glutamyl-tRNA(Gln) amidotransferase subunit D of Pyrococcus abyssi (strain GE5 / Orsay).